Here is a 289-residue protein sequence, read N- to C-terminus: 4-diphosphocytidyl-2-C-methyl-D-erythritol kinase (289 aa).

Residue lysine 10 is part of the active site. ATP is bound at residue 94–104; the sequence is PVAAGLAGGSS. The active site involves aspartate 136.

Belongs to the GHMP kinase family. IspE subfamily.

It carries out the reaction 4-CDP-2-C-methyl-D-erythritol + ATP = 4-CDP-2-C-methyl-D-erythritol 2-phosphate + ADP + H(+). It functions in the pathway isoprenoid biosynthesis; isopentenyl diphosphate biosynthesis via DXP pathway; isopentenyl diphosphate from 1-deoxy-D-xylulose 5-phosphate: step 3/6. Catalyzes the phosphorylation of the position 2 hydroxy group of 4-diphosphocytidyl-2C-methyl-D-erythritol. This Bacillus cytotoxicus (strain DSM 22905 / CIP 110041 / 391-98 / NVH 391-98) protein is 4-diphosphocytidyl-2-C-methyl-D-erythritol kinase.